The primary structure comprises 485 residues: Protein DETOXIFICATION 8 (485 aa).

Residues 1-26 (MENGFSLVPKEEEEEEDYSNEKSEDQ) are disordered. 12 helical membrane passes run 41 to 61 (FMAA…VISI), 74 to 94 (AVAI…FGLA), 118 to 138 (YGSM…WVFM), 159 to 179 (SIWL…TRFF), 188 to 208 (LFLS…LLVY), 212 to 232 (FGIV…VGLL), 263 to 283 (LAIP…LLIL), 297 to 317 (VLSI…AIGA), 338 to 358 (AANS…ISLY), 381 to 401 (ITPF…LSGV), 414 to 434 (ANIG…CFVV), and 442 to 462 (WIGI…VTFF).

Belongs to the multi antimicrobial extrusion (MATE) (TC 2.A.66.1) family.

Its subcellular location is the membrane. The chain is Protein DETOXIFICATION 8 from Arabidopsis thaliana (Mouse-ear cress).